The chain runs to 314 residues: Serine/threonine-protein phosphatase PP2A-5 catalytic subunit (314 aa).

Mn(2+) is bound by residues aspartate 62, histidine 64, aspartate 90, and asparagine 122. Catalysis depends on histidine 123, which acts as the Proton donor. Histidine 172 and histidine 246 together coordinate Mn(2+).

It belongs to the PPP phosphatase family. PP-2A subfamily. The cofactor is Mn(2+).

Its subcellular location is the cytoplasm. It carries out the reaction O-phospho-L-seryl-[protein] + H2O = L-seryl-[protein] + phosphate. The enzyme catalyses O-phospho-L-threonyl-[protein] + H2O = L-threonyl-[protein] + phosphate. This chain is Serine/threonine-protein phosphatase PP2A-5 catalytic subunit (NPP5), found in Nicotiana tabacum (Common tobacco).